The chain runs to 921 residues: Ubiquitin carboxyl-terminal hydrolase 11 (921 aa).

Residues 1–16 (MAAVAADPAAAAVPAS) are compositionally biased toward low complexity. A disordered region spans residues 1–29 (MAAVAADPAAAAVPASAEDRETQPEAMPD). The 106-residue stretch at 28 to 133 (PDLDQQWRQI…DQPPIERKVI (106 aa)) folds into the DUSP domain. Lys-194 bears the N6-acetyllysine mark. Residues 257 to 889 (CGLTNLGNTC…AAYVLFYQRQ (633 aa)) form the USP domain. Cys-266 (nucleophile) is an active-site residue. The segment at 592 to 697 (TKPTSDDDDG…DRTTSPEEAQ (106 aa)) is disordered. Ser-596 is subject to Phosphoserine. The segment covering 597-624 (DDDDGDEKGDENEDEDVEDDSSSEEEKE) has biased composition (acidic residues). Polar residues-rich tracts occupy residues 657–666 (LDNSLHTSQW) and 676–697 (FTLQ…EEAQ). At Ser-692 the chain carries Phosphoserine. The active-site Proton acceptor is the His-847. The interval 893 to 921 (RRQSQTASSETPTSPASSSTPNSDIMDVN) is disordered. The segment covering 895 to 915 (QSQTASSETPTSPASSSTPNS) has biased composition (low complexity). At Ser-906 the chain carries Phosphoserine.

It belongs to the peptidase C19 family. Monomer. Associated component of the Polycomb group (PcG) multiprotein PRC1-like complex. Interacts with RANBP9/RANBPM. Interacts with BRCA2. Interacts with CHUK/IKKA. Interacts with NFKBIA. Interacts with SPRY3, RAE1, MYCBP2/PAM, and KCTD6.

The protein localises to the nucleus. The protein resides in the cytoplasm. It is found in the chromosome. The enzyme catalyses Thiol-dependent hydrolysis of ester, thioester, amide, peptide and isopeptide bonds formed by the C-terminal Gly of ubiquitin (a 76-residue protein attached to proteins as an intracellular targeting signal).. Functionally, protease that can remove conjugated ubiquitin from target proteins and polyubiquitin chains. Inhibits the degradation of target proteins by the proteasome. Cleaves preferentially 'Lys-6' and 'Lys-63'-linked ubiquitin chains. Has lower activity with 'Lys-11' and 'Lys-33'-linked ubiquitin chains, and extremely low activity with 'Lys-27', 'Lys-29' and 'Lys-48'-linked ubiquitin chains (in vitro). Plays a role in the regulation of pathways leading to NF-kappa-B activation. Plays a role in the regulation of DNA repair after double-stranded DNA breaks. Acts as a chromatin regulator via its association with the Polycomb group (PcG) multiprotein PRC1-like complex; may act by deubiquitinating components of the PRC1-like comple. Promotes cell proliferation by deubiquitinating phosphorylated E2F1x. The protein is Ubiquitin carboxyl-terminal hydrolase 11 of Rattus norvegicus (Rat).